The primary structure comprises 368 residues: Meiotic driver wtf23 (368 aa).

The disordered stretch occupies residues 1–98 (MKNKYYPLRS…SSGTADNSST (98 aa)). The span at 11–29 (SMDELSAKNDNEIDLEKGP) shows a compositional bias: basic and acidic residues. Composition is skewed to polar residues over residues 57–72 (GANN…STTP) and 89–98 (SSGTADNSST). 7 helical membrane passes run 105–124 (FLSF…YLTY), 139–158 (YFGV…WYFY), 170–192 (IFLA…VISI), 202–221 (MIII…GCVK), 234–256 (STCT…FWTF), 266–283 (VFLL…TMFL), and 328–350 (GIAF…FRGG).

Belongs to the WTF family. As to quaternary structure, homomer. Forms protein aggregates. The two isoforms can interact with each other and with themselves. High sequence similarity is required for their interaction.

It localises to the spore membrane. Its subcellular location is the vacuole membrane. The protein resides in the ascus epiplasm. It is found in the cytoplasm. The protein localises to the endoplasmic reticulum membrane. Promotes unequal transmission of alleles from the parental zygote to progeny spores by acting as poison/antidote system where the poison and antidote proteins are produced from the same locus; the poison component is trans-acting and targets all spores within an ascus whereas the antidote component is spore-specific, leading to poisoning of all progeny that do not inherit the allele. Functionally, localizes isoform 2 to the vacuole thereby facilitating its degradation. In terms of biological role, forms toxic aggregates that disrupt spore maturation. This Schizosaccharomyces pombe (strain 972 / ATCC 24843) (Fission yeast) protein is Meiotic driver wtf23.